The sequence spans 643 residues: Phosphomethylpyrimidine synthase (643 aa).

Residues asparagine 248, methionine 277, tyrosine 306, histidine 342, 362–364 (SRG), 403–406 (DGLR), and glutamate 442 contribute to the substrate site. Histidine 446 is a Zn(2+) binding site. Position 469 (tyrosine 469) interacts with substrate. Residue histidine 510 participates in Zn(2+) binding. Positions 590, 593, and 598 each coordinate [4Fe-4S] cluster.

The protein belongs to the ThiC family. In terms of assembly, homodimer. It depends on [4Fe-4S] cluster as a cofactor.

The catalysed reaction is 5-amino-1-(5-phospho-beta-D-ribosyl)imidazole + S-adenosyl-L-methionine = 4-amino-2-methyl-5-(phosphooxymethyl)pyrimidine + CO + 5'-deoxyadenosine + formate + L-methionine + 3 H(+). Its pathway is cofactor biosynthesis; thiamine diphosphate biosynthesis. Its function is as follows. Catalyzes the synthesis of the hydroxymethylpyrimidine phosphate (HMP-P) moiety of thiamine from aminoimidazole ribotide (AIR) in a radical S-adenosyl-L-methionine (SAM)-dependent reaction. In Paraburkholderia phytofirmans (strain DSM 17436 / LMG 22146 / PsJN) (Burkholderia phytofirmans), this protein is Phosphomethylpyrimidine synthase.